The primary structure comprises 120 residues: Glycine cleavage system H protein (120 aa).

The Lipoyl-binding domain maps to Val-17–Lys-99. At Lys-58 the chain carries N6-lipoyllysine.

Belongs to the GcvH family. The glycine cleavage system is composed of four proteins: P, T, L and H. It depends on (R)-lipoate as a cofactor.

In terms of biological role, the glycine cleavage system catalyzes the degradation of glycine. The H protein shuttles the methylamine group of glycine from the P protein to the T protein. This is Glycine cleavage system H protein from Sinorhizobium medicae (strain WSM419) (Ensifer medicae).